The chain runs to 375 residues: Alcohol dehydrogenase 1 (375 aa).

Ser-2 carries the N-acetylserine modification. Positions 47, 68, 98, 101, 104, 112, and 175 each coordinate Zn(2+). NAD(+)-binding positions include Gly-200–Gly-205, Asp-224, and Lys-229. Lys-234 bears the N6-succinyllysine mark. Val-293 to Val-295 lines the NAD(+) pocket. Position 340 is an N6-succinyllysine (Lys-340). Arg-370 lines the NAD(+) pocket.

The protein belongs to the zinc-containing alcohol dehydrogenase family. Class-I subfamily. As to quaternary structure, dimer of identical or non-identical chains of three types (A, B, C), which are coded by 3 separate genes at different loci. Zn(2+) is required as a cofactor. In terms of tissue distribution, expressed at high levels in the liver, small intestine and eye, at moderate levels in kidney, ovary and uterus, and at low levels in the spinal cord, thymus, heart, stomach mucosa, skin and testis.

Its subcellular location is the cytoplasm. The enzyme catalyses a primary alcohol + NAD(+) = an aldehyde + NADH + H(+). It catalyses the reaction a secondary alcohol + NAD(+) = a ketone + NADH + H(+). The sequence is that of Alcohol dehydrogenase 1 (Adh1) from Mus musculus (Mouse).